We begin with the raw amino-acid sequence, 469 residues long: GTPase Der (469 aa).

EngA-type G domains follow at residues Pro30 to Ala193 and Arg203 to Asp376. GTP is bound by residues Gly36–Ser43, Asp83–Trp87, Asn145–Asp148, Gly209–Ser216, Asp256–Leu260, and Asn321–Asp324. Residues Thr377–Glu459 enclose the KH-like domain.

Belongs to the TRAFAC class TrmE-Era-EngA-EngB-Septin-like GTPase superfamily. EngA (Der) GTPase family. In terms of assembly, associates with the 50S ribosomal subunit.

Its function is as follows. GTPase that plays an essential role in the late steps of ribosome biogenesis. This Mycobacterium ulcerans (strain Agy99) protein is GTPase Der.